Consider the following 547-residue polypeptide: 4-coumarate-CoA ligase 1 (547 aa).

ATP contacts are provided by residues serine 190–threonine 194, histidine 238, alanine 310–proline 312, glutamine 332–glycine 333, threonine 337, aspartate 421, arginine 436, and lysine 527. Positions glutamate 263–glutamine 332 are SBD1. The SBD2 stretch occupies residues glycine 333 to tyrosine 400.

It belongs to the ATP-dependent AMP-binding enzyme family. In terms of tissue distribution, mostly expressed in stems, and, to a lower extent, in bulbs.

It catalyses the reaction (E)-4-coumarate + ATP + CoA = (E)-4-coumaroyl-CoA + AMP + diphosphate. Its pathway is phytoalexin biosynthesis; 3,4',5-trihydroxystilbene biosynthesis; 3,4',5-trihydroxystilbene from trans-4-coumarate: step 1/2. In terms of biological role, produces CoA thioesters of a variety of hydroxy- and methoxy-substituted cinnamic acids, which are used to synthesize several phenylpropanoid-derived compounds, including anthocyanins, flavonoids, isoflavonoids, coumarins, lignin, suberin and wall-bound phenolics. The polypeptide is 4-coumarate-CoA ligase 1 (Narcissus pseudonarcissus (Daffodil)).